Reading from the N-terminus, the 1760-residue chain is Cilia- and flagella-associated protein 44 (1760 aa).

WD repeat units follow at residues 119–160 (GATK…MVLR), 163–202 (CHNTDVYTVLFSPFDSGLLVSGGAGHIKFWTMANTFTGLK), 213–251 (LEISNVSGFVVLSDGKVISGSESGLIILWEGDLIRCCFA), 276–315 (CHEGAINVVELMEGGRVLMTAGDDGYFRFWRVSELEVAEG), and 388–427 (FNGGSITSAALSPIDHTVVTGGEDGTIRLVDYVTPRELYK). Over residues 1155-1165 (RQEEKLREQTA) the composition is skewed to basic and acidic residues. The segment at 1155-1224 (RQEEKLREQT…FGTAAARTRS (70 aa)) is disordered. Polar residues predominate over residues 1181–1190 (PATNTDTSGA). A compositionally biased stretch (basic and acidic residues) spans 1194-1205 (ATRRSEGEDSRK). A coiled-coil region spans residues 1348–1389 (YDEARNSRDRCLREMEELQRLVQDQTASIEKLQEANKVFRRE). The interval 1420–1444 (HSDMSGNDDDITSDDDDDDDMGEDE) is disordered. A compositionally biased stretch (acidic residues) spans 1425 to 1444 (GNDDDITSDDDDDDDMGEDE).

It belongs to the CFAP44 family.

The protein resides in the cell projection. It localises to the cilium. Its subcellular location is the flagellum. It is found in the cytoplasm. The protein localises to the cytoskeleton. The protein resides in the flagellum axoneme. In terms of biological role, flagellar protein involved in flagellum axoneme organization and function. This is Cilia- and flagella-associated protein 44 from Trypanosoma brucei brucei (strain 927/4 GUTat10.1).